Consider the following 624-residue polypeptide: Threonine--tRNA ligase (624 aa).

Residues 1-143 (MRLLFIHADE…SRTVTPEAAE (143 aa)) are editing domain. Residues 197 to 499 (AHVKLMREKE…EQEGKLPTLP (303 aa)) are catalytic. Residues Cys289, His340, and His467 each coordinate Zn(2+). Residues 598–624 (LERETEGKPRVPLTIPDRLSRRPRFGR) form a disordered region.

It belongs to the class-II aminoacyl-tRNA synthetase family. As to quaternary structure, homodimer. Requires Zn(2+) as cofactor.

It is found in the cytoplasm. The enzyme catalyses tRNA(Thr) + L-threonine + ATP = L-threonyl-tRNA(Thr) + AMP + diphosphate + H(+). Its function is as follows. Catalyzes the attachment of threonine to tRNA(Thr) in a two-step reaction: L-threonine is first activated by ATP to form Thr-AMP and then transferred to the acceptor end of tRNA(Thr). Also edits incorrectly charged L-seryl-tRNA(Thr). The chain is Threonine--tRNA ligase from Methanopyrus kandleri (strain AV19 / DSM 6324 / JCM 9639 / NBRC 100938).